The following is a 545-amino-acid chain: Metal transporter NRAT1 (545 aa).

12 consecutive transmembrane segments (helical) span residues Phe51–Leu71, Glu84–Ala104, Ile128–Gly148, Ile155–Leu175, Phe188–Leu208, Ile234–Leu254, Leu278–Cys298, Val333–Ala353, Leu373–Ala395, Leu398–Leu418, Val437–Trp457, and Gly474–Leu494. Positions Glu516–Met545 are disordered. Basic and acidic residues predominate over residues Tyr536–Met545.

It belongs to the NRAMP (TC 2.A.55) family. As to expression, expressed at low levels in roots.

It is found in the cell membrane. Functionally, metal transporter that transports the trivalent cation aluminum (Al(3+)), but does not seem to transport divalent cations such as iron (Fe(2+)), manganese (Mg(2+)) or Cadmium (Cd(2+)). Involved in Al tolerance by taking up Al in root cells, where it is detoxified by chelation with organic acid anions and sequestration into the vacuoles. The sequence is that of Metal transporter NRAT1 (NRAT1) from Oryza sativa subsp. japonica (Rice).